The sequence spans 416 residues: Thyroid hormone receptor alpha (416 aa).

The interval 1-30 (MEPISNVEDPNSSEGDEKRWPDGPKRKRKN) is disordered. The modulating stretch occupies residues 1-58 (MEPISNVEDPNSSEGDEKRWPDGPKRKRKNSTCSVKSMSALSLSVQGYIPSYLEKDEP). Basic and acidic residues predominate over residues 15 to 24 (GDEKRWPDGP). Residues cysteine 59, cysteine 62, cysteine 76, cysteine 79, cysteine 97, cysteine 103, cysteine 113, and cysteine 116 each coordinate Zn(2+). NR C4-type zinc fingers lie at residues 59 to 79 (CVVC…CEGC) and 97 to 121 (CKYD…FRKC). A DNA-binding region (nuclear receptor) is located at residues 59–133 (CVVCGDKATG…VCMAMDLVLD (75 aa)). The NR LBD domain occupies 169–413 (SEWELIRHVT…PPLFLEVFED (245 aa)). Positions 234 and 283 each coordinate 3,3',5-triiodo-L-thyronine.

It belongs to the nuclear hormone receptor family. NR1 subfamily.

The protein resides in the nucleus. In terms of biological role, nuclear hormone receptor that can act as a repressor or activator of transcription. High affinity receptor for thyroid hormones, including triiodothyronine and thyroxine. This chain is Thyroid hormone receptor alpha (thra1), found in Salmo salar (Atlantic salmon).